The sequence spans 692 residues: Follicle-stimulating hormone receptor (692 aa).

Positions 1–17 (MALLLVSLLAFLGSGSG) are cleaved as a signal peptide. Cystine bridges form between Cys18-Cys25 and Cys23-Cys32. Residues 18-46 (CHHWLCHCSNRVFLCQDSKVTEIPPDLPR) enclose the LRRNT domain. Residues 18–365 (CHHWLCHCSN…EDIMGYNILR (348 aa)) lie on the Extracellular side of the membrane. LRR repeat units follow at residues 49–72 (IELR…FGDL), 73–97 (EKIE…LPNL), 98–118 (HEIR…AFQN), 119–143 (LPSL…KIQS), 144–169 (LQKV…MGLS), 170–192 (FESV…AFNG), 193–216 (TQLD…VFQG), 217–240 (ASGP…GLEN), and 241–259 (LKKL…PSLD). N-linked (GlcNAc...) asparagine glycans are attached at residues Asn191 and Asn199. 4 disulfide bridges follow: Cys275–Cys345, Cys276–Cys292, Cys276–Cys355, and Cys292–Cys337. Residue Asn293 is glycosylated (N-linked (GlcNAc...) asparagine). Position 334 is a sulfotyrosine (Tyr334). Residues 366 to 386 (VLIWFISILAITGNTTVLVVL) form a helical membrane-spanning segment. Over 387-397 (TTSQYKLTVPR) the chain is Cytoplasmic. The chain crosses the membrane as a helical span at residues 398 to 420 (FLMCNLAFADLCIGIYLLLIASV). The Extracellular portion of the chain corresponds to 421–442 (DIHTKSQYHNYAIDWQTGAGCD). Cys441 and Cys516 are oxidised to a cystine. The helical transmembrane segment at 443–464 (AAGFFTVFASELSVYTLAAITL) threads the bilayer. The Cytoplasmic segment spans residues 465 to 484 (ERWHTITHAMQLECKVQLCH). The helical transmembrane segment at 485 to 507 (AASIMVLGWAFAFAAALFPIFGI) threads the bilayer. Residues 508-527 (SSYMKVSICLPMDIDSPLSQ) lie on the Extracellular side of the membrane. Residues 528-549 (LYVMALLVLNALAFVVICGCYT) form a helical membrane-spanning segment. The Cytoplasmic segment spans residues 550–572 (HIYLTVRNPNIVSSSRDTKIAKR). Residues 573-596 (MATLIFTDFLCMAPILFFAISASL) traverse the membrane as a helical segment. Residues 597–607 (KVPLITVSKAK) lie on the Extracellular side of the membrane. A helical membrane pass occupies residues 608 to 629 (ILLVLFYPINSCANPFLYAIFT). At 630–692 (KNFRRDFFVL…LVPLNHSVQN (63 aa)) the chain is on the cytoplasmic side.

It belongs to the G-protein coupled receptor 1 family. FSH/LSH/TSH subfamily. In terms of assembly, homotrimer. Functions as a homotrimer binding the FSH hormone heterodimer composed of CGA and FSHB. Interacts with ARRB2. Interacts with APPL2; interaction is independent of follicle stimulating hormone stimulation. In terms of processing, N-glycosylated; indirectly required for FSH-binding, possibly via a conformational change that allows high affinity binding of hormone. Sulfated.

It is found in the cell membrane. G protein-coupled receptor for follitropin, the follicle-stimulating hormone. Through cAMP production activates the downstream PI3K-AKT and ERK1/ERK2 signaling pathways. The chain is Follicle-stimulating hormone receptor (Fshr) from Mus musculus (Mouse).